The sequence spans 221 residues: Probable septum site-determining protein MinC (221 aa).

This sequence belongs to the MinC family. In terms of assembly, interacts with MinD and FtsZ.

Functionally, cell division inhibitor that blocks the formation of polar Z ring septums. Rapidly oscillates between the poles of the cell to destabilize FtsZ filaments that have formed before they mature into polar Z rings. Prevents FtsZ polymerization. This chain is Probable septum site-determining protein MinC, found in Aliivibrio fischeri (strain MJ11) (Vibrio fischeri).